The sequence spans 393 residues: Probable acetyl-CoA acyltransferase (393 aa).

C88 functions as the Acyl-thioester intermediate in the catalytic mechanism. Active-site proton acceptor residues include H349 and C378.

The protein belongs to the thiolase-like superfamily. Thiolase family.

The protein resides in the cytoplasm. It carries out the reaction 2 acetyl-CoA = acetoacetyl-CoA + CoA. In Staphylococcus aureus (strain COL), this protein is Probable acetyl-CoA acyltransferase.